The sequence spans 413 residues: Ras association domain-containing protein 5 (413 aa).

A disordered region spans residues 1–105; that stretch reads MASPAIGQRP…RDVRSIFEQP (105 aa). Residues 61–74 are compositionally biased toward basic and acidic residues; sequence ARGDPEPTPRDCRH. The Phorbol-ester/DAG-type zinc-finger motif lies at 117 to 165; sequence GHRFAELALRGGPGWCDLCGREVLRQALRCANCKFTCHPECRSLIQLDC. Phosphoserine is present on residues S177 and S274. Residues 265-359 form the Ras-associating domain; the sequence is PAATTDKRTS…LSFVLKENET (95 aa). T347 bears the Phosphothreonine mark. Residues 361–408 enclose the SARAH domain; it reads DVEWDAFSIPELQNFLTILEKEEQDKIHQLQKKYNKFRQKLEEALRES.

As to quaternary structure, interacts directly with activated HRAS; a RASSF5-STK4/MST1 complex probably associates with activated HRAS. Interacts with KRAS. Probably interacts with Ras-like GTPases RRAS, MRAS, RAP1B, RAP2A and RALA. Interacts with RRAS2. Can self-associate. Interacts with RSSF1 isoform A. The RSSF1 isoform A-RSSF5 heterodimer probably mediates the association of RSSF1 with HRAS. Isoform 2 interacts with activated RAP1A and ITGAL/LFA-1. Binds STK4/MST1, inhibiting STK4/MST1 autoactivation.

It is found in the cytoplasm. The protein resides in the cytoskeleton. Its function is as follows. Potential tumor suppressor. Seems to be involved in lymphocyte adhesion by linking RAP1A activation upon T-cell receptor or chemokine stimulation to integrin activation. Stimulates lymphocyte polarization and the patch-like distribution of ITGAL/LFA-1, resulting in an enhanced adhesion to ICAM1. Together with RAP1A may participate in regulation of microtubule growth. The association with activated RAP1A is required for directional movement of endothelial cells during wound healing. May be involved in regulation of Ras apoptotic function. The RASSF5-STK4/MST1 complex may mediate HRAS and KRAS induced apoptosis. This is Ras association domain-containing protein 5 (Rassf5) from Rattus norvegicus (Rat).